The following is a 387-amino-acid chain: Dual-specificity RNA methyltransferase RlmN (387 aa).

Catalysis depends on Glu-93, which acts as the Proton acceptor. A Radical SAM core domain is found at 99 to 343; sequence EENRGTLCIS…TTVRKTRGDD (245 aa). An intrachain disulfide couples Cys-106 to Cys-348. Cys-113, Cys-117, and Cys-120 together coordinate [4Fe-4S] cluster. Residues 172 to 173, Ser-204, 226 to 228, and Asn-305 each bind S-adenosyl-L-methionine; these read GE and SLH. The active-site S-methylcysteine intermediate is Cys-348.

Belongs to the radical SAM superfamily. RlmN family. [4Fe-4S] cluster is required as a cofactor.

Its subcellular location is the cytoplasm. It carries out the reaction adenosine(2503) in 23S rRNA + 2 reduced [2Fe-2S]-[ferredoxin] + 2 S-adenosyl-L-methionine = 2-methyladenosine(2503) in 23S rRNA + 5'-deoxyadenosine + L-methionine + 2 oxidized [2Fe-2S]-[ferredoxin] + S-adenosyl-L-homocysteine. It catalyses the reaction adenosine(37) in tRNA + 2 reduced [2Fe-2S]-[ferredoxin] + 2 S-adenosyl-L-methionine = 2-methyladenosine(37) in tRNA + 5'-deoxyadenosine + L-methionine + 2 oxidized [2Fe-2S]-[ferredoxin] + S-adenosyl-L-homocysteine. Its function is as follows. Specifically methylates position 2 of adenine 2503 in 23S rRNA and position 2 of adenine 37 in tRNAs. m2A2503 modification seems to play a crucial role in the proofreading step occurring at the peptidyl transferase center and thus would serve to optimize ribosomal fidelity. The sequence is that of Dual-specificity RNA methyltransferase RlmN from Janthinobacterium sp. (strain Marseille) (Minibacterium massiliensis).